The chain runs to 110 residues: BET1-like protein (110 aa).

Topologically, residues 1–85 (MADPWNRGHG…MVRSGRDNRK (85 aa)) are cytoplasmic. One can recognise a t-SNARE coiled-coil homology domain in the interval 14 to 76 (DMLDAENKRM…TGSVKRFSTM (63 aa)). A helical; Anchor for type IV membrane protein membrane pass occupies residues 86-106 (ILCYVSVGLVVAFFLLYYLVS). Residues 107–110 (RMQN) lie on the Lumenal side of the membrane.

As to quaternary structure, component of a SNARE complex consisting of stx5, ykt6, gosr2 and bet1l.

Its subcellular location is the golgi apparatus membrane. Its function is as follows. Vesicle SNARE required for targeting and fusion of retrograde transport vesicles with the Golgi complex. Required for the integrity of the Golgi complex. The polypeptide is BET1-like protein (bet1l) (Danio rerio (Zebrafish)).